The chain runs to 312 residues: Malate dehydrogenase (312 aa).

Residues 7-13 (GAAGGIG) and Asp34 each bind NAD(+). Substrate is bound by residues Arg81 and Arg87. Residues Asn94 and 117-119 (ITN) contribute to the NAD(+) site. Asn119 and Arg153 together coordinate substrate. Catalysis depends on His177, which acts as the Proton acceptor. Met227 is a binding site for NAD(+).

This sequence belongs to the LDH/MDH superfamily. MDH type 1 family. In terms of assembly, homodimer.

It catalyses the reaction (S)-malate + NAD(+) = oxaloacetate + NADH + H(+). In terms of biological role, catalyzes the reversible oxidation of malate to oxaloacetate. The chain is Malate dehydrogenase from Serratia proteamaculans (strain 568).